Reading from the N-terminus, the 228-residue chain is Demethylmenaquinone methyltransferase (228 aa).

S-adenosyl-L-methionine contacts are provided by residues Thr-62, Asp-80, 100 to 101 (DA), and Ser-117.

The protein belongs to the class I-like SAM-binding methyltransferase superfamily. MenG/UbiE family.

The enzyme catalyses a 2-demethylmenaquinol + S-adenosyl-L-methionine = a menaquinol + S-adenosyl-L-homocysteine + H(+). Its pathway is quinol/quinone metabolism; menaquinone biosynthesis; menaquinol from 1,4-dihydroxy-2-naphthoate: step 2/2. In terms of biological role, methyltransferase required for the conversion of demethylmenaquinol (DMKH2) to menaquinol (MKH2). The polypeptide is Demethylmenaquinone methyltransferase (Mycolicibacterium gilvum (strain PYR-GCK) (Mycobacterium gilvum (strain PYR-GCK))).